A 615-amino-acid polypeptide reads, in one-letter code: MATVIHSPRDPNTLSNYNNWVSTHITATFDILFEQKKLVGNVVHKLKSITDARSTEIILDTNHVDIGDVKVDGQASHWELLPPLEPYGAALKINLDQGVGLNEMVEVEISVKTTEKCTALQWLTPAQTSNRKHPYMFSQCQAIHARSIFPCQDTPDVKSTIDFNITSPLPVVASGLPVRGIIEKAQPGSKTLYQFHQKLPIPSYLFALASGDISEAAIGPRSVVATSPDKLSECQWELKADTENFIHAIEKIVYPYAWGEYNVLILPPSFPYGGMENPIFTFATPSIISKDRENVDVIAHELAHSWSGNLVTNASWEHFWLNEGWTTYLERRVSLHGEAYRHFSAIIGWKSLADSVEHFGHDHPFTKLVTDLKGKDPDDAFSSIPYEKGFNFLFHLENLLAKDKFDRFIPHYFTKFKGKSLDSYEFKATMLEFFQHDLEASNLLKNVDWDAWFYAPGLPPKPQFDTSLVDVVYELSSKWKSLPDSSFQPRTSDIEGLTANQIVVLLEQILLFERPLTPELSRVLGEVYSLAKSENIEVSNLYFQVGLRAGDDTVYKPTAELLGKIGRMKFVRPLYRNLQKVNRPLAIETFEKNKDFYHPICRAMVEKDLFGKREE.

A peptide contacts are provided by residues 139–141 and 271–276; these read QCQ and PYGGME. A Zn(2+)-binding site is contributed by histidine 300. Glutamate 301 (proton acceptor) is an active-site residue. Residues histidine 304 and glutamate 323 each contribute to the Zn(2+) site. The Proton donor role is filled by tyrosine 386.

Belongs to the peptidase M1 family. Requires Zn(2+) as cofactor.

Its subcellular location is the cytoplasm. The protein resides in the nucleus. The catalysed reaction is an epoxide + H2O = an ethanediol. Functionally, aminopeptidase that preferentially cleaves di- and tripeptides. Also has low epoxide hydrolase activity (in vitro). Can hydrolyze the epoxide leukotriene LTA(4) but it forms preferentially 5,6-dihydroxy-7,9,11,14-eicosatetraenoic acid rather than the cytokine leukotriene B(4) as the product compared to the homologous mammalian enzyme (in vitro). The chain is Leucine aminopeptidase 2 from Aspergillus oryzae (strain ATCC 42149 / RIB 40) (Yellow koji mold).